The primary structure comprises 816 residues: Phosphatidylinositol 4-kinase beta (816 aa).

The segment at 1 to 30 is disordered; it reads MGDTVVEPAPLKPTSEPTSGPPGNNGGSLL. At Gly-2 the chain carries N-acetylglycine. In terms of domain architecture, PIK helical spans 29-242; the sequence is LLSVITEGVG…GTKLRKLILS (214 aa). Residues 41–67 are interaction with ACBD3; sequence SVIDPEVAQKACQEVLEKVKLLHGGVA. 2 disordered regions span residues 101–120 and 248–318; these read EDEM…RRRR and AHRK…SFSS. Residue Ser-258 is modified to Phosphoserine. Thr-263 is modified (phosphothreonine). Phosphoserine occurs at positions 266, 275, 277, 284, and 294. Composition is skewed to polar residues over residues 278–297 and 306–318; these read DATA…SNPK and SSST…SFSS. A Phosphoserine modification is found at Ser-428. The residue at position 438 (Thr-438) is a Phosphothreonine. Ser-511 bears the Phosphoserine mark. Phosphothreonine occurs at positions 517 and 519. In terms of domain architecture, PI3K/PI4K catalytic spans 535-801; that stretch reads EPWQEKVRRI…MVDGSMRSIT (267 aa). The G-loop stretch occupies residues 541–547; that stretch reads VRRIREG. The segment at 668 to 676 is catalytic loop; that stretch reads QVKDRHNGN. Positions 687–711 are activation loop; it reads HIDFGFILSSSPRNLGFETSAFKLT.

This sequence belongs to the PI3/PI4-kinase family. Type III PI4K subfamily. As to quaternary structure, interacts with ARF1 and ARF3 in the Golgi complex, but not with ARF4, ARF5 or ARF6. Interacts with NCS1/FREQ in a calcium-independent manner. Interacts with CALN1/CABP8 and CALN2/CABP7; in a calcium-dependent manner; this interaction competes with NCS1/FREQ binding. Interacts with ACBD3. Interacts with ARMH3, YWHAB, YWHAE, YWHAG, YWHAH, YWHAQ, YWHAZ and SFN. Interacts with GGA2 (via VHS domain); the interaction is important for PI4KB location at the Golgi apparatus membrane. Interacts with ATG9A. In terms of assembly, (Microbial infection) Interacts with Aichi virus protein 3A. Part of a complex Aichi virus protein 3A/ACBD3/PI4KB that allows the synthesis of PI4P at the viral RNA replication sites. The cofactor is Mg(2+). Mn(2+) is required as a cofactor. In terms of tissue distribution, widely expressed with highest levels in heart, skeletal muscle, pancreas, testis and ovary. Weakly expressed in liver. Expressed in the innear ear in the epithelium of the spinal organ of corti.

It is found in the endomembrane system. The protein localises to the mitochondrion outer membrane. Its subcellular location is the rough endoplasmic reticulum membrane. It localises to the golgi apparatus. The protein resides in the golgi apparatus membrane. It is found in the cytoplasm. The protein localises to the perinuclear region. The enzyme catalyses a 1,2-diacyl-sn-glycero-3-phospho-(1D-myo-inositol) + ATP = a 1,2-diacyl-sn-glycero-3-phospho-(1D-myo-inositol 4-phosphate) + ADP + H(+). Its activity is regulated as follows. Inhibited by wortmannin and adenosine. Increased kinase activity upon interaction with NCS1/FREQ. With respect to regulation, (Microbial infection) Activated by Aichi virus protein 3A, this activation is sensitized by ACBD3. Its function is as follows. Phosphorylates phosphatidylinositol (PI) in the first committed step in the production of the second messenger inositol-1,4,5,-trisphosphate (PIP). May regulate Golgi disintegration/reorganization during mitosis, possibly via its phosphorylation. Involved in Golgi-to-plasma membrane trafficking. May play an important role in the inner ear development. Functionally, (Microbial infection) Plays an essential role in Aichi virus RNA replication. Recruited by ACBD3 at the viral replication sites. In terms of biological role, (Microbial infection) Required for cellular spike-mediated entry of human coronavirus SARS-CoV. The chain is Phosphatidylinositol 4-kinase beta from Homo sapiens (Human).